The sequence spans 678 residues: Methionine--tRNA ligase (678 aa).

Positions 14–24 (PYANGSIHLGH) match the 'HIGH' region motif. The Zn(2+) site is built by C145, C148, C158, and C161. A 'KMSKS' region motif is present at residues 331 to 335 (KMSKS). K334 lines the ATP pocket. Positions 576–678 (AFAAVDLRIA…SGAKPGQRVK (103 aa)) constitute a tRNA-binding domain.

This sequence belongs to the class-I aminoacyl-tRNA synthetase family. MetG type 1 subfamily. As to quaternary structure, homodimer. The cofactor is Zn(2+).

It localises to the cytoplasm. The catalysed reaction is tRNA(Met) + L-methionine + ATP = L-methionyl-tRNA(Met) + AMP + diphosphate. Functionally, is required not only for elongation of protein synthesis but also for the initiation of all mRNA translation through initiator tRNA(fMet) aminoacylation. The sequence is that of Methionine--tRNA ligase from Ectopseudomonas mendocina (strain ymp) (Pseudomonas mendocina).